The chain runs to 663 residues: Leishmanolysin-like peptidase (663 aa).

Residue histidine 246 participates in Zn(2+) binding. The active site involves glutamate 247. Zn(2+)-binding residues include histidine 250 and histidine 353.

It belongs to the peptidase M8 family. It depends on Zn(2+) as a cofactor.

The protein localises to the cytoplasm. Functionally, metalloprotease. This Caenorhabditis briggsae protein is Leishmanolysin-like peptidase.